The chain runs to 1520 residues: Accessory colonization factor AcfD (1520 aa).

The N-terminal stretch at 1–16 is a signal peptide; that stretch reads MKIRIVSLIVLGFLIG. Residue cysteine 17 is the site of N-palmitoyl cysteine attachment. Cysteine 17 carries S-diacylglycerol cysteine lipidation. The Peptidase M60 domain maps to 1085–1388; the sequence is GNRQPTGQWA…MFAQLKEWAE (304 aa).

The protein resides in the cell membrane. The protein is Accessory colonization factor AcfD (acfD) of Vibrio cholerae serotype O1 (strain ATCC 39315 / El Tor Inaba N16961).